Reading from the N-terminus, the 260-residue chain is Small ribosomal subunit protein eS1 (260 aa).

Over residues Met-1–Lys-18 the composition is skewed to basic residues. Residues Met-1–Ala-20 are disordered.

This sequence belongs to the eukaryotic ribosomal protein eS1 family. Component of the small ribosomal subunit. Mature ribosomes consist of a small (40S) and a large (60S) subunit. The 40S subunit contains about 33 different proteins and 1 molecule of RNA (18S). The 60S subunit contains about 49 different proteins and 3 molecules of RNA (25S, 5.8S and 5S).

Its subcellular location is the cytoplasm. The protein is Small ribosomal subunit protein eS1 of Ostreococcus lucimarinus (strain CCE9901).